Reading from the N-terminus, the 1269-residue chain is Histone-lysine N-methyltransferase SETDB1 (1269 aa).

Positions 9–63 form a coiled coil; that stretch reads KELGISMDDLRELIDRELEKIEFVKQRKAQLLEMEQLVKQKEAEVDHVDKLFDNA. Disordered regions lie at residues 85 to 121 and 153 to 188; these read YKES…GEAV and QKKS…DMSK. A compositionally biased stretch (acidic residues) spans 103 to 112; sequence EIPDEDDDDV. Residues 164-177 are compositionally biased toward low complexity; the sequence is SSHPSSPTSSVGGS. Tudor domains are found at residues 250 to 312 and 340 to 395; these read ENLT…RPWS and VLLK…MFSM. The segment covering 396–414 has biased composition (polar residues); sequence KTSNASTQEKQQAGQQRTR. The interval 396–516 is disordered; it reads KTSNASTQEK…FQSNQSVQPV (121 aa). Low complexity predominate over residues 462 to 476; it reads DSQQAQSKKQVAKKS. Residues 486–497 show a composition bias toward polar residues; it reads SGQSSPIPTESV. The MBD domain maps to 620-691; sequence HRGKNPLLVP…EMFCLDPYVL (72 aa). Residues 753 to 826 form the Pre-SET domain; that stretch reads VGCDCTDGCR…MCNNRLVQHG (74 aa). Zn(2+)-binding residues include Cys755, Cys757, Cys761, Cys767, Cys769, Cys807, Cys811, Cys813, and Cys818. One can recognise an SET domain in the interval 829–1244; it reads VRLQLFKTQN…AGTELTWDYN (416 aa). Residues 839-841, Asp877, and Tyr879 contribute to the S-adenosyl-L-methionine site; that span reads KGW. A disordered region spans residues 894 to 1139; that stretch reads EGYESDAKSS…VAASAGPVKR (246 aa). The segment covering 919 to 932 has biased composition (acidic residues); it reads SGSEDQEESNDSSD. Composition is skewed to basic and acidic residues over residues 968–989 and 1021–1033; these read ASKD…ETSK and ETDK…EASK. A compositionally biased stretch (low complexity) spans 1078–1094; the sequence is TEEVLTLSSSSDSEVGS. A compositionally biased stretch (polar residues) spans 1106-1120; the sequence is ATANDSDDIQTISSG. S-adenosyl-L-methionine is bound by residues Arg1198 and 1201 to 1202; that span reads NH. Positions 1204, 1257, 1259, and 1264 each coordinate Zn(2+). A Post-SET domain is found at 1253–1269; sequence KKLLCCCGSTECRGRLL.

The protein belongs to the class V-like SAM-binding methyltransferase superfamily. Histone-lysine methyltransferase family. Suvar3-9 subfamily.

It localises to the nucleus. The protein resides in the chromosome. The enzyme catalyses N(6),N(6)-dimethyl-L-lysyl(9)-[histone H3] + S-adenosyl-L-methionine = N(6),N(6),N(6)-trimethyl-L-lysyl(9)-[histone H3] + S-adenosyl-L-homocysteine + H(+). Its function is as follows. Histone methyltransferase that specifically trimethylates 'Lys-9' of histone H3. H3 'Lys-9' trimethylation represents a specific tag for epigenetic transcriptional repression by recruiting HP1 (CBX1, CBX3 and/or CBX5) proteins to methylated histones. Mainly functions in euchromatin regions, thereby playing a central role in the silencing of euchromatic genes. H3 'Lys-9' trimethylation is coordinated with DNA methylation. Plays a role in promoter hypermethylation and transcriptional silencing of tumor suppressor genes (TSGs) or other tumor-related genes. Also required to maintain a transcriptionally repressive state of genes in undifferentiated embryonic stem cells (ESCs). Associates at promoter regions of tumor suppressor genes (TSGs) leading to their gene silencing. The chain is Histone-lysine N-methyltransferase SETDB1 (setdb1) from Xenopus laevis (African clawed frog).